Here is a 274-residue protein sequence, read N- to C-terminus: Putative phosphoenolpyruvate synthase regulatory protein (274 aa).

Residue 155–162 (GVSRSGKT) participates in ADP binding.

This sequence belongs to the pyruvate, phosphate/water dikinase regulatory protein family. PSRP subfamily.

The catalysed reaction is [pyruvate, water dikinase] + ADP = [pyruvate, water dikinase]-phosphate + AMP + H(+). It carries out the reaction [pyruvate, water dikinase]-phosphate + phosphate + H(+) = [pyruvate, water dikinase] + diphosphate. Bifunctional serine/threonine kinase and phosphorylase involved in the regulation of the phosphoenolpyruvate synthase (PEPS) by catalyzing its phosphorylation/dephosphorylation. The protein is Putative phosphoenolpyruvate synthase regulatory protein of Laribacter hongkongensis (strain HLHK9).